A 239-amino-acid chain; its full sequence is tRNA (guanine-N(7)-)-methyltransferase (239 aa).

S-adenosyl-L-methionine-binding residues include Glu68, Glu93, Asp120, and Asp143. Asp143 is an active-site residue. Residues Lys147, Asp180, and Thr217–Glu220 each bind substrate.

This sequence belongs to the class I-like SAM-binding methyltransferase superfamily. TrmB family.

The catalysed reaction is guanosine(46) in tRNA + S-adenosyl-L-methionine = N(7)-methylguanosine(46) in tRNA + S-adenosyl-L-homocysteine. It functions in the pathway tRNA modification; N(7)-methylguanine-tRNA biosynthesis. In terms of biological role, catalyzes the formation of N(7)-methylguanine at position 46 (m7G46) in tRNA. In Vibrio vulnificus (strain CMCP6), this protein is tRNA (guanine-N(7)-)-methyltransferase.